The following is a 366-amino-acid chain: Holliday junction branch migration complex subunit RuvB (366 aa).

Positions 1 to 48 are disordered; the sequence is MIDRLMAREAIYQQSNPDPGGDPPEDGPPHGKNAADGGDEPDRGPDPD. A large ATPase domain (RuvB-L) region spans residues 21–212; the sequence is GDPPEDGPPH…FQIREHLGWY (192 aa). ATP-binding positions include L51, R52, G93, K96, T97, T98, 159 to 161, R202, Y212, and R249; that span reads EDF. Position 97 (T97) interacts with Mg(2+). The small ATPAse domain (RuvB-S) stretch occupies residues 213–283; the sequence is TRKELAEIVL…VCEAALDMIG (71 aa). The tract at residues 286–366 is head domain (RuvB-H); that stretch reads HLGLDKQDRN…KRQMPDRPLS (81 aa). DNA is bound by residues R341, R343, and R346.

This sequence belongs to the RuvB family. As to quaternary structure, homohexamer. Forms an RuvA(8)-RuvB(12)-Holliday junction (HJ) complex. HJ DNA is sandwiched between 2 RuvA tetramers; dsDNA enters through RuvA and exits via RuvB. An RuvB hexamer assembles on each DNA strand where it exits the tetramer. Each RuvB hexamer is contacted by two RuvA subunits (via domain III) on 2 adjacent RuvB subunits; this complex drives branch migration. In the full resolvosome a probable DNA-RuvA(4)-RuvB(12)-RuvC(2) complex forms which resolves the HJ.

The protein localises to the cytoplasm. It catalyses the reaction ATP + H2O = ADP + phosphate + H(+). The RuvA-RuvB-RuvC complex processes Holliday junction (HJ) DNA during genetic recombination and DNA repair, while the RuvA-RuvB complex plays an important role in the rescue of blocked DNA replication forks via replication fork reversal (RFR). RuvA specifically binds to HJ cruciform DNA, conferring on it an open structure. The RuvB hexamer acts as an ATP-dependent pump, pulling dsDNA into and through the RuvAB complex. RuvB forms 2 homohexamers on either side of HJ DNA bound by 1 or 2 RuvA tetramers; 4 subunits per hexamer contact DNA at a time. Coordinated motions by a converter formed by DNA-disengaged RuvB subunits stimulates ATP hydrolysis and nucleotide exchange. Immobilization of the converter enables RuvB to convert the ATP-contained energy into a lever motion, pulling 2 nucleotides of DNA out of the RuvA tetramer per ATP hydrolyzed, thus driving DNA branch migration. The RuvB motors rotate together with the DNA substrate, which together with the progressing nucleotide cycle form the mechanistic basis for DNA recombination by continuous HJ branch migration. Branch migration allows RuvC to scan DNA until it finds its consensus sequence, where it cleaves and resolves cruciform DNA. The sequence is that of Holliday junction branch migration complex subunit RuvB from Rhodopirellula baltica (strain DSM 10527 / NCIMB 13988 / SH1).